The sequence spans 247 residues: Geranylgeranylglyceryl phosphate synthase (247 aa).

Mg(2+) contacts are provided by D23 and S52. Sn-glycerol 1-phosphate-binding positions include 171–177 (YLEAGSG), 203–204 (GG), and 225–226 (GT).

The protein belongs to the GGGP/HepGP synthase family. Group II subfamily. The cofactor is Mg(2+).

The protein localises to the cytoplasm. The catalysed reaction is sn-glycerol 1-phosphate + (2E,6E,10E)-geranylgeranyl diphosphate = sn-3-O-(geranylgeranyl)glycerol 1-phosphate + diphosphate. The protein operates within membrane lipid metabolism; glycerophospholipid metabolism. Prenyltransferase that catalyzes the transfer of the geranylgeranyl moiety of geranylgeranyl diphosphate (GGPP) to the C3 hydroxyl of sn-glycerol-1-phosphate (G1P). This reaction is the first ether-bond-formation step in the biosynthesis of archaeal membrane lipids. This Methanosarcina acetivorans (strain ATCC 35395 / DSM 2834 / JCM 12185 / C2A) protein is Geranylgeranylglyceryl phosphate synthase.